Reading from the N-terminus, the 1145-residue chain is Protein sumv-2 (1145 aa).

The segment covering 1–13 has biased composition (basic residues); that stretch reads MKPGRKSLPKKNR. Disordered regions lie at residues 1–310, 429–464, 999–1025, 1040–1059, and 1073–1145; these read MKPG…APPA, QSRTKLKGSSKEREETPAFDEESPIGGDEKRQQKAR, HSASSSAAPSPVGASGRRATVTGAGSE, QIAAPSISGPPPPAPSPRTE, and ITTG…ISLI. Residues 14–34 show a composition bias toward polar residues; sequence ASNITEKMPTTSTEAQSSSSK. Basic and acidic residues-rich tracts occupy residues 73-104 and 216-225; these read KTTEEVKSPRKSARKSELKKPEPEEKAKEPRK and VPEKKPKIED. The span at 226-248 shows a compositional bias: low complexity; that stretch reads APTTSSPKKSTPTSAPPTRASAR. Residues 455 to 464 are compositionally biased toward basic and acidic residues; sequence GDEKRQQKAR. Residues 999–1013 are compositionally biased toward low complexity; that stretch reads HSASSSAAPSPVGAS. Basic and acidic residues predominate over residues 1091–1102; the sequence is VIERGDFRDHRP. The segment covering 1121–1136 has biased composition (pro residues); it reads QQPPLPSPAPPPPRGP.

In terms of biological role, influences the activity of genes involved in vulval development. The sequence is that of Protein sumv-2 from Caenorhabditis elegans.